Consider the following 64-residue polypeptide: Large ribosomal subunit protein bL35 (64 aa).

The segment covering 1 to 28 (MPKMKTKSGAAKRFKKTAGGLKHKHAFK) has biased composition (basic residues). The segment at 1–64 (MPKMKTKSGA…ARVERSLRLR (64 aa)) is disordered. Residues 53–64 (DVARVERSLRLR) are compositionally biased toward basic and acidic residues.

It belongs to the bacterial ribosomal protein bL35 family.

This chain is Large ribosomal subunit protein bL35, found in Pseudomonas aeruginosa (strain LESB58).